We begin with the raw amino-acid sequence, 359 residues long: Photosystem II protein D1 1 (359 aa).

Transmembrane regions (helical) follow at residues 29 to 46, 118 to 133, and 142 to 156; these read YVGW…AATT, HFLI…EWEL, and WICI…AASA. His-118 contributes to the chlorophyll a binding site. Tyr-126 is a binding site for pheophytin a. Residues Asp-170 and Glu-189 each contribute to the [CaMn4O5] cluster site. A helical transmembrane segment spans residues 197–218; it reads FHMLGVAGVFGGSLFSAMHGSL. His-198 serves as a coordination point for chlorophyll a. A quinone-binding positions include His-215 and 264–265; that span reads SF. His-215 is a binding site for Fe cation. His-272 is a binding site for Fe cation. A helical transmembrane segment spans residues 274-288; that stretch reads FLAAWPVVGIWFTAL. Residues His-332, Glu-333, Asp-342, and Ala-344 each coordinate [CaMn4O5] cluster. A propeptide spanning residues 345 to 359 is cleaved from the precursor; it reads AAESAPVALQAPAIG.

This sequence belongs to the reaction center PufL/M/PsbA/D family. PSII is composed of 1 copy each of membrane proteins PsbA, PsbB, PsbC, PsbD, PsbE, PsbF, PsbH, PsbI, PsbJ, PsbK, PsbL, PsbM, PsbT, PsbX, PsbY, PsbZ, Psb30/Ycf12, peripheral proteins PsbO, CyanoQ (PsbQ), PsbU, PsbV and a large number of cofactors. It forms dimeric complexes. Requires The D1/D2 heterodimer binds P680, chlorophylls that are the primary electron donor of PSII, and subsequent electron acceptors. It shares a non-heme iron and each subunit binds pheophytin, quinone, additional chlorophylls, carotenoids and lipids. D1 provides most of the ligands for the Mn4-Ca-O5 cluster of the oxygen-evolving complex (OEC). There is also a Cl(-1) ion associated with D1 and D2, which is required for oxygen evolution. The PSII complex binds additional chlorophylls, carotenoids and specific lipids. as cofactor. In terms of processing, tyr-161 forms a radical intermediate that is referred to as redox-active TyrZ, YZ or Y-Z. Post-translationally, C-terminally processed by CtpA; processing is essential to allow assembly of the oxygen-evolving complex and thus photosynthetic growth.

Its subcellular location is the cellular thylakoid membrane. The catalysed reaction is 2 a plastoquinone + 4 hnu + 2 H2O = 2 a plastoquinol + O2. Its function is as follows. Photosystem II (PSII) is a light-driven water:plastoquinone oxidoreductase that uses light energy to abstract electrons from H(2)O, generating O(2) and a proton gradient subsequently used for ATP formation. It consists of a core antenna complex that captures photons, and an electron transfer chain that converts photonic excitation into a charge separation. The D1/D2 (PsbA/PsbD) reaction center heterodimer binds P680, the primary electron donor of PSII as well as several subsequent electron acceptors. This is Photosystem II protein D1 1 from Synechococcus sp. (strain RCC307).